The following is a 384-amino-acid chain: Spermidine/putrescine import ATP-binding protein PotA (384 aa).

The ABC transporter domain maps to Ile-6–Ile-238. Gly-40–Ser-47 serves as a coordination point for ATP.

This sequence belongs to the ABC transporter superfamily. Spermidine/putrescine importer (TC 3.A.1.11.1) family. The complex is composed of two ATP-binding proteins (PotA), two transmembrane proteins (PotB and PotC) and a solute-binding protein (PotD).

Its subcellular location is the cell membrane. It carries out the reaction ATP + H2O + polyamine-[polyamine-binding protein]Side 1 = ADP + phosphate + polyamineSide 2 + [polyamine-binding protein]Side 1.. In terms of biological role, part of the ABC transporter complex PotABCD involved in spermidine/putrescine import. Responsible for energy coupling to the transport system. This is Spermidine/putrescine import ATP-binding protein PotA from Streptococcus pyogenes serotype M12 (strain MGAS2096).